We begin with the raw amino-acid sequence, 276 residues long: S-adenosylmethionine decarboxylase proenzyme (276 aa).

Catalysis depends on Ser124, which acts as the Schiff-base intermediate with substrate; via pyruvic acid. Ser124 carries the pyruvic acid (Ser); by autocatalysis modification. The active-site Proton acceptor; for processing activity is His129. Cys152 serves as the catalytic Proton donor; for catalytic activity.

It belongs to the prokaryotic AdoMetDC family. Type 2 subfamily. As to quaternary structure, heterooctamer of four alpha and four beta chains arranged as a tetramer of alpha/beta heterodimers. Requires pyruvate as cofactor. Is synthesized initially as an inactive proenzyme. Formation of the active enzyme involves a self-maturation process in which the active site pyruvoyl group is generated from an internal serine residue via an autocatalytic post-translational modification. Two non-identical subunits are generated from the proenzyme in this reaction, and the pyruvate is formed at the N-terminus of the alpha chain, which is derived from the carboxyl end of the proenzyme. The post-translation cleavage follows an unusual pathway, termed non-hydrolytic serinolysis, in which the side chain hydroxyl group of the serine supplies its oxygen atom to form the C-terminus of the beta chain, while the remainder of the serine residue undergoes an oxidative deamination to produce ammonia and the pyruvoyl group blocking the N-terminus of the alpha chain.

The catalysed reaction is S-adenosyl-L-methionine + H(+) = S-adenosyl 3-(methylsulfanyl)propylamine + CO2. It participates in amine and polyamine biosynthesis; S-adenosylmethioninamine biosynthesis; S-adenosylmethioninamine from S-adenosyl-L-methionine: step 1/1. Catalyzes the decarboxylation of S-adenosylmethionine to S-adenosylmethioninamine (dcAdoMet), the propylamine donor required for the synthesis of the polyamines spermine and spermidine from the diamine putrescine. This is S-adenosylmethionine decarboxylase proenzyme from Desulfitobacterium hafniense (strain DSM 10664 / DCB-2).